Reading from the N-terminus, the 570-residue chain is Coiled-coil domain-containing protein 22 homolog (570 aa).

2 disordered regions span residues 110-129 (RQSE…REQL) and 234-280 (LTST…PLEL). The span at 248–257 (TSPTQTSTTA) shows a compositional bias: polar residues. Low complexity predominate over residues 265–276 (SSEATATSTTTT). Coiled-coil stretches lie at residues 308-471 (ELKI…LQRQ) and 529-570 (GEKL…ITVG).

Belongs to the CCDC22 family.

The protein is Coiled-coil domain-containing protein 22 homolog of Drosophila willistoni (Fruit fly).